The primary structure comprises 456 residues: Divalent metal cation transporter MntH (456 aa).

11 consecutive transmembrane segments (helical) span residues 47-67 (ALSFFGPGYLVAVGYMDPGNW), 77-97 (FGYALLSVVLLSNLMAVLLQA), 123-143 (AWPLWLLAELAICATDLAEVI), 151-171 (LLFGIPLEIGVILTAVDVLLV), 184-204 (ALIITLLGVIALCFLTQIIMA), 227-247 (MLYIALGIIGATVMPHNLYLH), 276-296 (IALTFALVINASILILAAASF), 316-336 (PLLGSAIAPALFAIALLCCGL), 369-389 (FVAIVPAAIVTILYGSQGTTE), 392-412 (ILSQVVLSLQLPFAVIPLVIF), and 422-442 (LAAAPWVTFLAAITAAIIVVL).

The protein belongs to the NRAMP family.

Its subcellular location is the cell inner membrane. In terms of biological role, h(+)-stimulated, divalent metal cation uptake system. This Brucella suis biovar 1 (strain 1330) protein is Divalent metal cation transporter MntH.